A 675-amino-acid chain; its full sequence is MRPHFKTRYPQWLSCMLPLVTGCVFGAVWGSNLDSTVVLSSSTFSHSETQHHHHLAGAQHHPPSIAIYRSPASLRGGHAGATYIFGKGGGLIMYTWPNNERPSTRTDRLAVGFSTTIKDGILVRIDSAPRLGDYIMLHIEEGKVCVTFNIGTVDISVKEMTTEVNDGKYHVVRFTRNGGNATLQVDNWPINEHFPSGNSDIERFQMANKKIPFKYTRPVEDWLHEKGRQLTIFNTQATISIGGNDRKRPYQGQLSGLYYNGLKVLNMAAEGHANIKINGSVRLVGDVPTSRSPSRTTTSMPPEMSTTFIETTTTLSTTTTRKQRSPPTIQTTDDIVSSAECSSDDEDLEECDGGHTGGELVIPVLVEDPIDIPPISTRVPFIPLPPTLHPVLTIIETTKESLSIATEAGVPCFSDQGRDDCDDDDGDDDDGDGLVISGFGSGEVFDSSLPPTDDEDFYTTFSLVTDKILTTSTYEGGYKALAPKWEEKDFKPKKPSEVGRITAIPPLPDLRSSAASPVRPEPAPKIPAGKMNNREVKPQPDIVLLPLPTSFDMDGTKPKGPYITQPMLRTIPSALPTVPGIRRVPPGASEVIRESSSTTGMVVGIVSAAALCILILLYAMYKYRNRDEGSYQVDETRNYISNSAQNNGTVVKDKQPSTKGASNKRPKDKDKEYYV.

A signal peptide spans 1–30 (MRPHFKTRYPQWLSCMLPLVTGCVFGAVWG). Residues 31–599 (SNLDSTVVLS…EVIRESSSTT (569 aa)) lie on the Extracellular side of the membrane. The 201-residue stretch at 81–281 (ATYIFGKGGG…HANIKINGSV (201 aa)) folds into the Laminin G-like domain. 2 disordered regions span residues 313 to 337 (TTLS…DIVS) and 490 to 534 (FKPK…MNNR). Polar residues predominate over residues 325–335 (SPPTIQTTDDI). A helical membrane pass occupies residues 600 to 620 (GMVVGIVSAAALCILILLYAM). Over 621–675 (YKYRNRDEGSYQVDETRNYISNSAQNNGTVVKDKQPSTKGASNKRPKDKDKEYYV) the chain is Cytoplasmic. Positions 642-675 (NSAQNNGTVVKDKQPSTKGASNKRPKDKDKEYYV) are disordered. Basic and acidic residues predominate over residues 665 to 675 (RPKDKDKEYYV).

This sequence belongs to the neurexin family. Processed by alpha-secretase leading to the formation of an extracellular soluble protein as well as a C-terminal membrane-embedded fragment (CTF). Proteolysis of these CTFs by gamma-secretase releases intracellular domains (ICDs) and extracellular peptides.

Its subcellular location is the membrane. Its function is as follows. Neuronal cell surface protein that may be involved in cell recognition and cell adhesion. This is Neurexin-3b-beta (nrxn3b) from Danio rerio (Zebrafish).